The sequence spans 311 residues: Fluoride export protein 1 (311 aa).

Residues 1–6 are Cytoplasmic-facing; sequence MLLTQS. The helical transmembrane segment at 7 to 25 threads the bilayer; that stretch reads YFCIMSMLGTLARLGLTAL. The Extracellular portion of the chain corresponds to 26–29; that stretch reads NTYP. Residues 30-50 traverse the membrane as a helical segment; that stretch reads GAPFSGLLWVQFVGCVIMGFC. Residues 51-65 are Cytoplasmic-facing; sequence QTESVFFPRPKHNAT. A helical membrane pass occupies residues 66–86; the sequence is FLLAITTGFCGSLTTFSSWML. At 87 to 106 the chain is on the extracellular side; that stretch reads QMFTGMANLDPFERRGRGYS. Residues 107 to 127 form a helical membrane-spanning segment; the sequence is FLSVVSDFMVTMCIAMSSLIW. The Cytoplasmic segment spans residues 128-154; it reads GKQIGKTTGQWRIGKVAFAWPIPAHTH. A helical membrane pass occupies residues 155 to 175; that stretch reads IVVRVLLLLLSICFFVGAAFY. Residues 176–186 lie on the Extracellular side of the membrane; sequence TAYTTNVTHRG. The N-linked (GlcNAc...) asparagine glycan is linked to asparagine 181. A helical transmembrane segment spans residues 187–207; it reads IGFSLIFSPFAALTRLYLARF. Residues 208–212 are Cytoplasmic-facing; it reads LNSPQ. The chain crosses the membrane as a helical span at residues 213–233; that stretch reads YFIPYGTLCANVFATLLLSIM. At 234-250 the chain is on the extracellular side; the sequence is YMIPQITHCTPVSRSVM. Residues 251-268 form a helical membrane-spanning segment; the sequence is YGIQNGFCAVLSTLSTFS. Over 269-278 the chain is Cytoplasmic; sequence NELHTMPIKR. Residues 279 to 299 traverse the membrane as a helical segment; it reads AYIYCIISVAISFSICVIVDG. Residues 300-311 lie on the Extracellular side of the membrane; sequence ATAWGHGYTEKY.

It belongs to the fluoride channel Fluc/FEX (TC 1.A.43) family.

It localises to the cell membrane. It catalyses the reaction fluoride(in) = fluoride(out). Functionally, fluoride channel required for the rapid expulsion of cytoplasmic fluoride. This Schizosaccharomyces pombe (strain 972 / ATCC 24843) (Fission yeast) protein is Fluoride export protein 1 (fex1).